The sequence spans 144 residues: 3-dehydroquinate dehydratase (144 aa).

Tyrosine 22 serves as the catalytic Proton acceptor. The substrate site is built by asparagine 71, histidine 77, and aspartate 84. The active-site Proton donor is the histidine 97. Residues 98 to 99 (IS) and arginine 108 each bind substrate.

Belongs to the type-II 3-dehydroquinase family. As to quaternary structure, homododecamer.

The catalysed reaction is 3-dehydroquinate = 3-dehydroshikimate + H2O. It participates in metabolic intermediate biosynthesis; chorismate biosynthesis; chorismate from D-erythrose 4-phosphate and phosphoenolpyruvate: step 3/7. Functionally, catalyzes a trans-dehydration via an enolate intermediate. The polypeptide is 3-dehydroquinate dehydratase (Thermotoga petrophila (strain ATCC BAA-488 / DSM 13995 / JCM 10881 / RKU-1)).